We begin with the raw amino-acid sequence, 612 residues long: 2-isopropylmalate synthase B (612 aa).

Positions 71–344 (VRIFDTTLRD…YTGINTQHIL (274 aa)) constitute a Pyruvate carboxyltransferase domain. Residues D80, H277, and N313 each contribute to the a divalent metal cation site.

The protein belongs to the alpha-IPM synthase/homocitrate synthase family. LeuA type 1 subfamily. As to quaternary structure, homodimer. A divalent metal cation serves as cofactor.

It catalyses the reaction 3-methyl-2-oxobutanoate + acetyl-CoA + H2O = (2S)-2-isopropylmalate + CoA + H(+). The protein operates within amino-acid biosynthesis; L-leucine biosynthesis; L-leucine from 3-methyl-2-oxobutanoate: step 1/4. Catalyzes the condensation of the acetyl group of acetyl-CoA with 3-methyl-2-oxobutanoate (2-oxoisovalerate) to form 3-carboxy-3-hydroxy-4-methylpentanoate (2-isopropylmalate). The polypeptide is 2-isopropylmalate synthase B (IPMSB) (Solanum pennellii (Tomato)).